A 430-amino-acid polypeptide reads, in one-letter code: Adenylosuccinate synthetase (430 aa).

GTP is bound by residues 12 to 18 and 40 to 42; these read GDEGKGK and GHT. The active-site Proton acceptor is the Asp13. Residues Asp13 and Gly40 each contribute to the Mg(2+) site. IMP is bound by residues 13–16, 38–41, Thr130, Arg144, Gln224, Thr239, and Arg303; these read DEGK and NAGH. His41 acts as the Proton donor in catalysis. 299–305 is a binding site for substrate; it reads VNTGRKR. Residues Arg305, 331–333, and 413–415 contribute to the GTP site; these read KLD and STS.

Belongs to the adenylosuccinate synthetase family. In terms of assembly, homodimer. Requires Mg(2+) as cofactor.

It is found in the cytoplasm. It carries out the reaction IMP + L-aspartate + GTP = N(6)-(1,2-dicarboxyethyl)-AMP + GDP + phosphate + 2 H(+). It participates in purine metabolism; AMP biosynthesis via de novo pathway; AMP from IMP: step 1/2. Plays an important role in the de novo pathway of purine nucleotide biosynthesis. Catalyzes the first committed step in the biosynthesis of AMP from IMP. The sequence is that of Adenylosuccinate synthetase from Rhodopseudomonas palustris (strain BisA53).